The following is a 129-amino-acid chain: Glycine cleavage system H protein (129 aa).

The Lipoyl-binding domain maps to 23–104 (TVTVGITQHA…SYSAWLFKLK (82 aa)). K64 is subject to N6-lipoyllysine.

Belongs to the GcvH family. The glycine cleavage system is composed of four proteins: P, T, L and H. (R)-lipoate is required as a cofactor.

Its function is as follows. The glycine cleavage system catalyzes the degradation of glycine. The H protein shuttles the methylamine group of glycine from the P protein to the T protein. This is Glycine cleavage system H protein from Nitrosomonas eutropha (strain DSM 101675 / C91 / Nm57).